Reading from the N-terminus, the 103-residue chain is UPF0132 membrane protein AF_0105 (103 aa).

3 helical membrane-spanning segments follow: residues 5–25 (VAGA…LLME), 35–55 (AMQS…LSFI), and 58–78 (IGVL…LVCI).

This sequence belongs to the UPF0132 family.

Its subcellular location is the cell membrane. This chain is UPF0132 membrane protein AF_0105, found in Archaeoglobus fulgidus (strain ATCC 49558 / DSM 4304 / JCM 9628 / NBRC 100126 / VC-16).